A 677-amino-acid chain; its full sequence is Forkhead box protein P1 (677 aa).

The span at 1–18 (MMQESGTETKSNGSAIQN) shows a compositional bias: polar residues. Residues 1–43 (MMQESGTETKSNGSAIQNGSGGSNHLLECGGLREGRSNGETPA) form a disordered region. A Phosphoserine modification is found at S83. Residues 270–283 (IMNPHASTNGQLSV) show a composition bias toward polar residues. Residues 270–298 (IMNPHASTNGQLSVHTPKRESLSHEEHPH) are disordered. The span at 286–298 (PKRESLSHEEHPH) shows a compositional bias: basic and acidic residues. Residue K287 forms a Glycyl lysine isopeptide (Lys-Gly) (interchain with G-Cter in SUMO2) linkage. A C2H2-type zinc finger spans residues 306-331 (GVCKWPGCEAVCEDFQSFLKHLNSEH). A leucine-zipper region spans residues 348 to 369 (VQQLELQLAKDKERLQAMMTHL). Residues K372 and K377 each participate in a glycyl lysine isopeptide (Lys-Gly) (interchain with G-Cter in SUMO2) cross-link. The segment at 382-386 (PLNLV) is CTBP1-binding. A compositionally biased stretch (polar residues) spans 390-403 (TLSKSASEASPQSL). A disordered region spans residues 390–422 (TLSKSASEASPQSLPHTPTTPTAPLTPVTQGPS). Residues 404–418 (PHTPTTPTAPLTPVT) show a composition bias toward low complexity. Residue K442 forms a Glycyl lysine isopeptide (Lys-Gly) (interchain with G-Cter in SUMO2) linkage. Residues 465 to 555 (RPPFTYASLI…PQKISGNPSL (91 aa)) constitute a DNA-binding region (fork-head). Residues 611–677 (EHTNSNESDS…EDEPVNEDME (67 aa)) form a disordered region. Over residues 612–623 (HTNSNESDSSPG) the composition is skewed to polar residues. T653 carries the post-translational modification Phosphothreonine. S658 bears the Phosphoserine mark. Positions 667–677 (YEDEPVNEDME) are enriched in acidic residues.

In terms of assembly, forms homodimers and heterodimers with FOXP2 and FOXP4. Dimerization is required for DNA-binding. Self-associates. Interacts with CTBP1. Interacts with NCOR2 and AR. Interacts with FOXP2. Interacts with TBR1. Interacts with AURKA; this interaction facilitates the phosphorylation of FOXP1, which suppresses the expression of FBXL7. Interacts with ZMYM2. Isoform 8 is specifically expressed in embryonic stem cells.

The protein resides in the nucleus. In terms of biological role, transcriptional repressor. Can act with CTBP1 to synergistically repress transcription but CTPBP1 is not essential. Plays an important role in the specification and differentiation of lung epithelium. Acts cooperatively with FOXP4 to regulate lung secretory epithelial cell fate and regeneration by restricting the goblet cell lineage program; the function may involve regulation of AGR2. Essential transcriptional regulator of B-cell development. Involved in regulation of cardiac muscle cell proliferation. Involved in the columnar organization of spinal motor neurons. Promotes the formation of the lateral motor neuron column (LMC) and the preganglionic motor column (PGC) and is required for respective appropriate motor axon projections. The segment-appropriate generation of spinal cord motor columns requires cooperation with other Hox proteins. Can regulate PITX3 promoter activity; may promote midbrain identity in embryonic stem cell-derived dopamine neurons by regulating PITX3. Negatively regulates the differentiation of T follicular helper cells T(FH)s. Involved in maintenance of hair follicle stem cell quiescence; the function probably involves regulation of FGF18. Represses transcription of various pro-apoptotic genes and cooperates with NF-kappa B-signaling in promoting B-cell expansion by inhibition of caspase-dependent apoptosis. Binds to CSF1R promoter elements and is involved in regulation of monocyte differentiation and macrophage functions; repression of CSF1R in monocytes seems to involve NCOR2 as corepressor. Involved in endothelial cell proliferation, tube formation and migration indicative for a role in angiogenesis; the role in neovascularization seems to implicate suppression of SEMA5B. Can negatively regulate androgen receptor signaling. Acts as a transcriptional activator of the FBXL7 promoter; this activity is regulated by AURKA. Functionally, involved in transcriptional regulation in embryonic stem cells (ESCs). Stimulates expression of transcription factors that are required for pluripotency and decreases expression of differentiation-associated genes. Has distinct DNA-binding specifities as compared to the canonical form and preferentially binds DNA with the sequence 5'-CGATACAA-3' (or closely related sequences). Promotes ESC self-renewal and pluripotency. The chain is Forkhead box protein P1 (FOXP1) from Homo sapiens (Human).